Reading from the N-terminus, the 628-residue chain is Chaperone protein HtpG (628 aa).

Positions 1–333 (MTTDTKATET…SADLPLNVSR (333 aa)) are a; substrate-binding. The tract at residues 334-549 (EMIQESPLLA…EHGPDRQFER (216 aa)) is b. The interval 550 to 628 (LMNAAGRLDK…RLIARGIAKG (79 aa)) is c.

This sequence belongs to the heat shock protein 90 family. As to quaternary structure, homodimer.

The protein resides in the cytoplasm. In terms of biological role, molecular chaperone. Has ATPase activity. The chain is Chaperone protein HtpG from Mesorhizobium japonicum (strain LMG 29417 / CECT 9101 / MAFF 303099) (Mesorhizobium loti (strain MAFF 303099)).